Here is a 176-residue protein sequence, read N- to C-terminus: Ribonuclease mitogillin (176 aa).

The first 27 residues, 1–27 (MVAIKNLFLLAATAVSVLAAPSPLDAR), serve as a signal peptide directing secretion. 2 disulfides stabilise this stretch: C32–C174 and C102–C158. Residue H76 is part of the active site. The Proton acceptor role is filled by E122. The Proton donor role is filled by H163.

This sequence belongs to the ribonuclease U2 family.

The protein localises to the secreted. This purine-specific ribonuclease cleaves 28S RNA in eukaryotic ribosomes, inhibits protein synthesis, and shows antitumor activity. The protein is Ribonuclease mitogillin (mitF) of Aspergillus fumigatus (strain ATCC MYA-4609 / CBS 101355 / FGSC A1100 / Af293) (Neosartorya fumigata).